Here is a 291-residue protein sequence, read N- to C-terminus: Inactive dihydropteroate synthase 2 (291 aa).

In terms of domain architecture, Pterin-binding spans 15–272 (QLIMAIVNRT…EVVATRRVLE (258 aa)).

It belongs to the DHPS family. Homodimer.

Functionally, has very low affinity for the DHPS substrate 6-hydroxymethyl-7,8-dihydropterin-pyrophosphate, but can bind the inhibitor dapsone. Seems to lack dihydropteroate synthase activity, and does probably not function in folate metabolism. In Mycobacterium leprae (strain TN), this protein is Inactive dihydropteroate synthase 2 (folP2).